A 338-amino-acid chain; its full sequence is Holliday junction branch migration complex subunit RuvB (338 aa).

A disordered region spans residues 1–22; the sequence is MIEADRLIHAEPQGPEERDEQI. The segment at 4–187 is large ATPase domain (RuvB-L); it reads ADRLIHAEPQ…FGIPLRLEFY (184 aa). ATP contacts are provided by residues Arg27, Gly68, Lys71, Thr72, Thr73, 134-136, Arg177, Tyr187, and Arg224; that span reads EDY. Thr72 contributes to the Mg(2+) binding site. Positions 188-258 are small ATPAse domain (RuvB-S); it reads NTKDLSSIVS…VADLALDMLD (71 aa). The head domain (RuvB-H) stretch occupies residues 261–338; the sequence is SEGFDYMDRK…RHFDIIQPEK (78 aa). DNA-binding residues include Arg297, Arg316, and Arg321.

This sequence belongs to the RuvB family. As to quaternary structure, homohexamer. Forms an RuvA(8)-RuvB(12)-Holliday junction (HJ) complex. HJ DNA is sandwiched between 2 RuvA tetramers; dsDNA enters through RuvA and exits via RuvB. An RuvB hexamer assembles on each DNA strand where it exits the tetramer. Each RuvB hexamer is contacted by two RuvA subunits (via domain III) on 2 adjacent RuvB subunits; this complex drives branch migration. In the full resolvosome a probable DNA-RuvA(4)-RuvB(12)-RuvC(2) complex forms which resolves the HJ.

The protein resides in the cytoplasm. The catalysed reaction is ATP + H2O = ADP + phosphate + H(+). Functionally, the RuvA-RuvB-RuvC complex processes Holliday junction (HJ) DNA during genetic recombination and DNA repair, while the RuvA-RuvB complex plays an important role in the rescue of blocked DNA replication forks via replication fork reversal (RFR). RuvA specifically binds to HJ cruciform DNA, conferring on it an open structure. The RuvB hexamer acts as an ATP-dependent pump, pulling dsDNA into and through the RuvAB complex. RuvB forms 2 homohexamers on either side of HJ DNA bound by 1 or 2 RuvA tetramers; 4 subunits per hexamer contact DNA at a time. Coordinated motions by a converter formed by DNA-disengaged RuvB subunits stimulates ATP hydrolysis and nucleotide exchange. Immobilization of the converter enables RuvB to convert the ATP-contained energy into a lever motion, pulling 2 nucleotides of DNA out of the RuvA tetramer per ATP hydrolyzed, thus driving DNA branch migration. The RuvB motors rotate together with the DNA substrate, which together with the progressing nucleotide cycle form the mechanistic basis for DNA recombination by continuous HJ branch migration. Branch migration allows RuvC to scan DNA until it finds its consensus sequence, where it cleaves and resolves cruciform DNA. The chain is Holliday junction branch migration complex subunit RuvB from Shewanella sediminis (strain HAW-EB3).